The primary structure comprises 943 residues: Isoleucine--tRNA ligase (943 aa).

The short motif at 59–69 (PYANGQIHLGH) is the 'HIGH' region element. Glu-577 contacts L-isoleucyl-5'-AMP. The 'KMSKS' region signature appears at 618–622 (KMSKS). An ATP-binding site is contributed by Lys-621. The Zn(2+) site is built by Cys-906, Cys-909, Cys-926, and Cys-929.

Belongs to the class-I aminoacyl-tRNA synthetase family. IleS type 1 subfamily. In terms of assembly, monomer. Zn(2+) serves as cofactor.

Its subcellular location is the cytoplasm. It carries out the reaction tRNA(Ile) + L-isoleucine + ATP = L-isoleucyl-tRNA(Ile) + AMP + diphosphate. Catalyzes the attachment of isoleucine to tRNA(Ile). As IleRS can inadvertently accommodate and process structurally similar amino acids such as valine, to avoid such errors it has two additional distinct tRNA(Ile)-dependent editing activities. One activity is designated as 'pretransfer' editing and involves the hydrolysis of activated Val-AMP. The other activity is designated 'posttransfer' editing and involves deacylation of mischarged Val-tRNA(Ile). The polypeptide is Isoleucine--tRNA ligase (Xylella fastidiosa (strain M12)).